The chain runs to 594 residues: UvrABC system protein C (594 aa).

The region spanning 17–94 (LEPGCYLMKD…IKQYQPRYNI (78 aa)) is the GIY-YIG domain. Residues 199-234 (KTILNHLEERMNKASEQLDFEQAKEYRDMIQHIHNL) enclose the UVR domain.

It belongs to the UvrC family. As to quaternary structure, interacts with UvrB in an incision complex.

The protein localises to the cytoplasm. Its function is as follows. The UvrABC repair system catalyzes the recognition and processing of DNA lesions. UvrC both incises the 5' and 3' sides of the lesion. The N-terminal half is responsible for the 3' incision and the C-terminal half is responsible for the 5' incision. This Staphylococcus epidermidis (strain ATCC 35984 / DSM 28319 / BCRC 17069 / CCUG 31568 / BM 3577 / RP62A) protein is UvrABC system protein C.